Reading from the N-terminus, the 410-residue chain is Centromere protein U (410 aa).

The segment at 1–72 (MAARRSLRYS…YETFDPPLHS (72 aa)) is disordered. Residues 4–21 (RRSLRYSGDPGAKRSRNT) carry the Nuclear localization signal motif. A compositionally biased stretch (basic residues) spans 28 to 38 (RKQKAGQKPKR). Residue T73 is modified to Phosphothreonine; by PLK1. The tract at residues 87–228 (SSTSPATHRG…THSDASESMH (142 aa)) is disordered. The span at 101 to 115 (NLNPSENEASGNDSI) shows a compositional bias: polar residues. Phosphoserine is present on residues S105, S110, S114, S130, S133, and S135. Basic and acidic residues predominate over residues 138 to 149 (DNVRRSVSIERP). The span at 158–169 (PAAASSSSSPSE) shows a compositional bias: low complexity. Residue K179 forms a Glycyl lysine isopeptide (Lys-Gly) (interchain with G-Cter in SUMO2) linkage. A Phosphoserine modification is found at S186. Residue T191 is modified to Phosphothreonine. Over residues 200 to 218 (TQKKVRPSPGRRKRPRRGS) the composition is skewed to basic residues. S224 is modified (phosphoserine). Residues 289 to 352 (QMLKALKRKN…LKNSKHFLSN (64 aa)) adopt a coiled-coil conformation. Residues 295-312 (KRKNTKIISNMEKKRQRL) carry the Nuclear localization signal motif.

The protein belongs to the CENP-U/AME1 family. In terms of assembly, component of the CENPA-NAC complex, at least composed of CENPA, CENPC, CENPH, CENPM, CENPN, CENPT and CENPU. The CENPA-NAC complex interacts with the CENPA-CAD complex, composed of CENPI, CENPK, CENPL, CENPO, CENPP, CENPQ, CENPR and CENPS. Interacts with MLF1. Phosphorylated by PLK1 at Thr-73, creating a self-tethering site that specifically interacts with the polo-box domain of PLK1. In terms of tissue distribution, expressed at high levels in glioblastoma cell lines. Up-regulated in GBM (glioblastoma multiforme) tumors. Significantly increased in both the tumor core as well as the contralateral striatum and cortex in gliomas.

Its subcellular location is the cytoplasm. The protein resides in the nucleus. The protein localises to the chromosome. It is found in the centromere. It localises to the kinetochore. Its function is as follows. Component of the CENPA-NAC (nucleosome-associated) complex, a complex that plays a central role in assembly of kinetochore proteins, mitotic progression and chromosome segregation. The CENPA-NAC complex recruits the CENPA-CAD (nucleosome distal) complex and may be involved in incorporation of newly synthesized CENPA into centromeres. Plays an important role in the correct PLK1 localization to the mitotic kinetochores. A scaffold protein responsible for the initial recruitment and maintenance of the kinetochore PLK1 population until its degradation. Involved in transcriptional repression. This Rattus norvegicus (Rat) protein is Centromere protein U (Cenpu).